Consider the following 768-residue polypeptide: Eukaryotic elongation factor 2 kinase (768 aa).

A compositionally biased stretch (polar residues) spans 1 to 17 (MTIDTTNESDNSPTNSP). The tract at residues 1-21 (MTIDTTNESDNSPTNSPGLEA) is disordered. The 208-residue stretch at 102–309 (RYSAIRKQWT…ICETMDLSNF (208 aa)) folds into the Alpha-type protein kinase domain. 279 to 284 (GDGNLG) is a binding site for ATP. Over residues 402–411 (SEDEEDEEED) the composition is skewed to acidic residues. A disordered region spans residues 402-446 (SEDEEDEEEDYPRSEKSGNSQKSRRSRMSISTRSSGDESASRPRK).

It belongs to the protein kinase superfamily. Alpha-type protein kinase family. Monomer or homodimer. Interacts with cmd-1 in the presence of Ca(2+).

The catalysed reaction is [translation elongation factor 2] + ATP = [translation elongation factor 2]-phosphate + ADP + H(+). Its activity is regulated as follows. Calcium(2+)/calmodulin dependent activity. Undergoes calcium/calmodulin-dependent intramolecular autophosphorylation, and this results in it becoming partially calcium/calmodulin-independent. In terms of biological role, phosphorylates elongation factor-2 (eEF-2) at two threonine residues that are conserved in all eukaryotes and are located within a GTP-binding domain. Calcium(2+)/calmodulin dependent activity. Inactivates eEF-2 by catalyzing its phosphorylation. eEF-2 catalyzes the movement of the ribosome along mRNA during translation in eukaryotic cells. This chain is Eukaryotic elongation factor 2 kinase (efk-1), found in Caenorhabditis elegans.